The primary structure comprises 573 residues: DNA ligase (573 aa).

Residue Glu248 participates in ATP binding. Lys250 acts as the N6-AMP-lysine intermediate in catalysis. Positions 255, 270, 299, 340, 432, and 438 each coordinate ATP.

Belongs to the ATP-dependent DNA ligase family. It depends on Mg(2+) as a cofactor.

The catalysed reaction is ATP + (deoxyribonucleotide)n-3'-hydroxyl + 5'-phospho-(deoxyribonucleotide)m = (deoxyribonucleotide)n+m + AMP + diphosphate.. Functionally, DNA ligase that seals nicks in double-stranded DNA during DNA replication, DNA recombination and DNA repair. The sequence is that of DNA ligase from Methanocaldococcus jannaschii (strain ATCC 43067 / DSM 2661 / JAL-1 / JCM 10045 / NBRC 100440) (Methanococcus jannaschii).